Reading from the N-terminus, the 112-residue chain is Cytochrome c6 (112 aa).

Residues 1 to 25 (MKTLLTILALTLVTLTTWLSTPAFA) form the signal peptide. Positions 39, 42, 43, and 83 each coordinate heme c.

It belongs to the cytochrome c family. PetJ subfamily. In terms of assembly, monomer. Post-translationally, binds 1 heme c group covalently per subunit.

The protein localises to the cellular thylakoid lumen. Functions as an electron carrier between membrane-bound cytochrome b6-f and photosystem I in oxygenic photosynthesis. The chain is Cytochrome c6 from Synechococcus sp. (strain ATCC 27167 / PCC 6312).